Consider the following 122-residue polypeptide: Large ribosomal subunit protein uL14 (122 aa).

The protein belongs to the universal ribosomal protein uL14 family. Part of the 50S ribosomal subunit. Forms a cluster with proteins L3 and L19. In the 70S ribosome, L14 and L19 interact and together make contacts with the 16S rRNA in bridges B5 and B8.

Its function is as follows. Binds to 23S rRNA. Forms part of two intersubunit bridges in the 70S ribosome. This chain is Large ribosomal subunit protein uL14, found in Lysinibacillus sphaericus (strain C3-41).